The sequence spans 459 residues: Phosphomethylpyrimidine synthase (459 aa).

Substrate is bound by residues Asn-80, Met-109, Tyr-139, His-175, 195–197 (SRG), 236–239 (DSLR), and Glu-275. His-279 lines the Zn(2+) pocket. Substrate is bound at residue Tyr-302. His-343 lines the Zn(2+) pocket. Positions 423, 426, and 431 each coordinate [4Fe-4S] cluster.

This sequence belongs to the ThiC family. Requires [4Fe-4S] cluster as cofactor.

It carries out the reaction 5-amino-1-(5-phospho-beta-D-ribosyl)imidazole + S-adenosyl-L-methionine = 4-amino-2-methyl-5-(phosphooxymethyl)pyrimidine + CO + 5'-deoxyadenosine + formate + L-methionine + 3 H(+). The protein operates within cofactor biosynthesis; thiamine diphosphate biosynthesis. In terms of biological role, catalyzes the synthesis of the hydroxymethylpyrimidine phosphate (HMP-P) moiety of thiamine from aminoimidazole ribotide (AIR) in a radical S-adenosyl-L-methionine (SAM)-dependent reaction. The polypeptide is Phosphomethylpyrimidine synthase (Prochlorococcus marinus (strain MIT 9211)).